The chain runs to 1031 residues: Formin-binding protein 4 (1031 aa).

3 disordered regions span residues 1–102, 116–143, and 166–205; these read MMGK…TTRP, AYAD…NQAT, and APVV…QTPG. A Phosphoserine modification is found at serine 19. Low complexity-rich tracts occupy residues 41-73 and 83-92; these read DSTA…APED and VVEVPNVVQN. Phosphoserine occurs at positions 120, 125, and 128. Polar residues predominate over residues 134–143; that stretch reads SKEANGNQAT. A Phosphothreonine modification is found at threonine 176. Positions 190 to 203 are enriched in polar residues; that stretch reads LSPTASNGSDTAQT. The region spanning 218–252 is the WW 1 domain; that stretch reads EIEMGDWQEVWDENTGCYYYWNTQTNEVTWELPQY. An N6-acetyllysine modification is found at lysine 294. A Glycyl lysine isopeptide (Lys-Gly) (interchain with G-Cter in SUMO1) cross-link involves residue lysine 305. A Glycyl lysine isopeptide (Lys-Gly) (interchain with G-Cter in SUMO2) cross-link involves residue lysine 339. Lysine 352 participates in a covalent cross-link: Glycyl lysine isopeptide (Lys-Gly) (interchain with G-Cter in SUMO1); alternate. A Glycyl lysine isopeptide (Lys-Gly) (interchain with G-Cter in SUMO2); alternate cross-link involves residue lysine 352. The segment at 355–518 is disordered; the sequence is DPVSETKETS…KETEVEESSE (164 aa). The segment covering 400–414 has biased composition (acidic residues); the sequence is ESEEEEEEEEQDTLE. Over residues 418–430 the composition is skewed to basic and acidic residues; that stretch reads ALERKKAELRALE. Residues serine 435, serine 440, serine 443, serine 446, and serine 450 each carry the phosphoserine modification. Over residues 436–450 the composition is skewed to polar residues; the sequence is VSGSSPRSDISQPAS. Residues 457 to 466 show a composition bias toward basic residues; that stretch reads IMSKRGKWKM. Residues 469–482 show a composition bias toward low complexity; that stretch reads RATSPESTSRSSSK. 3 positions are modified to phosphoserine: serine 472, serine 507, and serine 516. The span at 499–518 shows a compositional bias: basic and acidic residues; sequence DSEKIDEISDKETEVEESSE. Lysine 527 participates in a covalent cross-link: Glycyl lysine isopeptide (Lys-Gly) (interchain with G-Cter in SUMO1); alternate. Lysine 527 is covalently cross-linked (Glycyl lysine isopeptide (Lys-Gly) (interchain with G-Cter in SUMO2); alternate). In terms of domain architecture, WW 2 spans 603–637; that stretch reads NATPKGWSCHWDRDHRRYFYVNEQSGESQWEFPDG. Disordered stretches follow at residues 629–681, 712–813, and 900–994; these read ESQW…SLCK, PLPL…VQRS, and PAQA…RIEE. Over residues 643 to 663 the composition is skewed to basic and acidic residues; sequence SQTKEVRDESLPKLTVKDKTC. The segment covering 664 to 677 has biased composition (polar residues); sequence TDPNSTESSENPTG. The span at 712-741 shows a compositional bias: pro residues; sequence PLPLEMPPPPPPPPESPPPPPPPPPPPPPL. Positions 742–757 are enriched in acidic residues; sequence EDGEIQEVEMEDEGSE. Residues 771–794 are compositionally biased toward polar residues; the sequence is KPSTQTTAVTSQSLVDSTASSPPS. The segment covering 913-939 has biased composition (pro residues); the sequence is VEPPPPPPPPPTPTPPPPPPAPKVPPP. Basic residues predominate over residues 943–955; it reads RKGKKDKAKKSKT. Positions 971-984 are enriched in acidic residues; that stretch reads LDEEDNSSSSEEDR. Residues serine 977, serine 978, and serine 979 each carry the phosphoserine modification. Over residues 985–994 the composition is skewed to basic and acidic residues; sequence ESTAQKRIEE.

In terms of assembly, binds FMN1. Interacts with the Arg/Gly-rich-flanked Pro-rich regions of KHDRBS1/SAM68. Arginine methylation in these regions has no effect on this binding. Ubiquitous. Highest levels in spleen and thymus.

This chain is Formin-binding protein 4 (Fnbp4), found in Mus musculus (Mouse).